Here is a 126-residue protein sequence, read N- to C-terminus: Fluoride-specific ion channel FluC (126 aa).

Helical transmembrane passes span 9-29, 35-55, 63-83, and 94-114; these read LAVF…GFQL, LTAT…LYAI, LLHL…SFVL, and WSIG…AAIL. 2 residues coordinate Na(+): glycine 73 and serine 76.

Belongs to the fluoride channel Fluc/FEX (TC 1.A.43) family.

The protein localises to the cell inner membrane. The catalysed reaction is fluoride(in) = fluoride(out). Na(+) is not transported, but it plays an essential structural role and its presence is essential for fluoride channel function. In terms of biological role, fluoride-specific ion channel. Important for reducing fluoride concentration in the cell, thus reducing its toxicity. The polypeptide is Fluoride-specific ion channel FluC (Ruegeria pomeroyi (strain ATCC 700808 / DSM 15171 / DSS-3) (Silicibacter pomeroyi)).